The chain runs to 248 residues: Phosphomannomutase (248 aa).

Residue D14 is the Nucleophile of the active site. Positions 14 and 16 each coordinate Mg(2+). D16 serves as the catalytic Proton donor/acceptor. R23, R125, R136, R143, S181, and D183 together coordinate alpha-D-mannose 1-phosphate. Residues D209, F221, and T226 each coordinate Mg(2+).

It belongs to the eukaryotic PMM family. In terms of assembly, homodimer. Mg(2+) serves as cofactor.

It localises to the cytoplasm. The enzyme catalyses alpha-D-mannose 1-phosphate = D-mannose 6-phosphate. Its pathway is nucleotide-sugar biosynthesis; GDP-alpha-D-mannose biosynthesis; alpha-D-mannose 1-phosphate from D-fructose 6-phosphate: step 2/2. Catalyzes the interconversion of mannose-6-phosphate to mannose-1-phosphate, the precursor for the synthesis of GDP-mannose. GDP-mannose is an essential sugar nucleotide for the synthesis of D-mannose-containing cell wall polysaccharides (galactomannans and glucomannans), glycolipids, glycoproteins and the antioxidant L-ascorbate. This chain is Phosphomannomutase, found in Oryza sativa subsp. indica (Rice).